Consider the following 272-residue polypeptide: Rhomboid-type serine protease B (272 aa).

Helical transmembrane passes span 30–50, 72–92, 103–123, 133–153, and 164–184; these read IVLLVILAFWLLELQTIWSVV, PFIHVGFFHAFVNLLALTPLL, TAVALFIGPLSTFPAGIYILV, AVVGASVWIFLLLGSEAIKTF, and TKIPTWTSPLFACALVSIFVP. Ser138 serves as the catalytic Nucleophile. Asn185 carries N-linked (GlcNAc...) asparagine glycosylation. The chain crosses the membrane as a helical span at residues 186 to 206; that stretch reads TSFLGHLSAIIIGYLLGLGYL. His191 is an active-site residue.

Belongs to the peptidase S54 family.

It localises to the membrane. It carries out the reaction Cleaves type-1 transmembrane domains using a catalytic dyad composed of serine and histidine that are contributed by different transmembrane domains.. Rhomboid protease that catalyzes intramembrane proteolysis. Required for transcription factor srbA activation by mediating its release from the membrane and thereby regulating its activity under hypoxic conditions. Essential for iron homeostasis and resistance to azoles such as voriconazole. Required for virulence in murine models of invasive pulmonary aspergillosis (IPA). The sequence is that of Rhomboid-type serine protease B from Aspergillus fumigatus (strain CBS 144.89 / FGSC A1163 / CEA10) (Neosartorya fumigata).